Consider the following 294-residue polypeptide: MKFDNDSEKQVFDKLKKAIPGIIKEKCAGYDELYGYKLNPEGLTQEEVDKYYDEKIADRLTYKLCKAYQFEYSTIVQNLIDILNWRREFNPLSCAYKEVHNTELQNVGILTFDANGDANKKAVTWNLYGQLVKKKELFQNVDKFVRYRIGLMEKGLSLLDFTSSDNNYMTQVHDYKGVSVWRMDSDIKNCSKTVIGIFQKYYPELLYAKYFVNVPTVFGWVYDLIKKFVDETTRKKFVVLTDGSKLGQYLKDCPYEGYGGKDKKNNLTKQNVTNVHPTEYGLYILQKQIIEDVE.

The region spanning 100-266 is the CRAL-TRIO domain; sequence HNTELQNVGI…GYGGKDKKNN (167 aa). Residues Y128, R148, H173, Y175, and K209 each coordinate heme.

It belongs to the SFH5 family. It depends on heme b as a cofactor.

It is found in the cytoplasm. It localises to the endoplasmic reticulum membrane. The protein localises to the microsome membrane. It carries out the reaction a 1,2-diacyl-sn-glycero-3-phospho-(1D-myo-inositol)(in) = a 1,2-diacyl-sn-glycero-3-phospho-(1D-myo-inositol)(out). Functionally, non-classical phosphatidylinositol (PtdIns) transfer protein (PITP), which exhibits PtdIns-binding/transfer activity in the absence of detectable PtdCho-binding/transfer activity. Regulates PtdIns(4,5)P2 homeostasis at the plasma membrane. Heme-binding protein that may play a role in organic oxidant-induced stress responses. In Saccharomyces cerevisiae (strain YJM789) (Baker's yeast), this protein is Phosphatidylinositol transfer protein SFH5 (SFH5).